The chain runs to 193 residues: Holliday junction branch migration complex subunit RuvA (193 aa).

The domain I stretch occupies residues 1 to 64 (MIGRIAGILL…EDANLLYGFL (64 aa)). The tract at residues 65–139 (TPQERTTFRE…GKLGADLGEL (75 aa)) is domain II. The interval 139-143 (LAGAA) is flexible linker. Positions 144–193 (SPSDHATDILNALLALGYSEKEGLAAIKNVPAGTGVSEGIKLALKALSKV) are domain III.

This sequence belongs to the RuvA family. In terms of assembly, homotetramer. Forms an RuvA(8)-RuvB(12)-Holliday junction (HJ) complex. HJ DNA is sandwiched between 2 RuvA tetramers; dsDNA enters through RuvA and exits via RuvB. An RuvB hexamer assembles on each DNA strand where it exits the tetramer. Each RuvB hexamer is contacted by two RuvA subunits (via domain III) on 2 adjacent RuvB subunits; this complex drives branch migration. In the full resolvosome a probable DNA-RuvA(4)-RuvB(12)-RuvC(2) complex forms which resolves the HJ.

The protein resides in the cytoplasm. The RuvA-RuvB-RuvC complex processes Holliday junction (HJ) DNA during genetic recombination and DNA repair, while the RuvA-RuvB complex plays an important role in the rescue of blocked DNA replication forks via replication fork reversal (RFR). RuvA specifically binds to HJ cruciform DNA, conferring on it an open structure. The RuvB hexamer acts as an ATP-dependent pump, pulling dsDNA into and through the RuvAB complex. HJ branch migration allows RuvC to scan DNA until it finds its consensus sequence, where it cleaves and resolves the cruciform DNA. The chain is Holliday junction branch migration complex subunit RuvA from Burkholderia lata (strain ATCC 17760 / DSM 23089 / LMG 22485 / NCIMB 9086 / R18194 / 383).